The sequence spans 336 residues: L-rhamnono-gamma-lactonase (336 aa).

This sequence belongs to the metallo-dependent hydrolases superfamily. The cofactor is a divalent metal cation.

The enzyme catalyses L-rhamnono-1,4-lactone + H2O = L-rhamnonate + H(+). With respect to regulation, inhibited by Zn(2+), Fe(2+) and Cu(2+), but not by EDTA. In terms of biological role, hydrolase with high substrate specificity for L-rhamnono-1,4-lactone. Catalyzes the second step in an alternative pathway for rhamnose utilization that does not involve phosphorylated intermediates. The polypeptide is L-rhamnono-gamma-lactonase (LRA2) (Scheffersomyces stipitis (strain ATCC 58785 / CBS 6054 / NBRC 10063 / NRRL Y-11545) (Yeast)).